A 198-amino-acid polypeptide reads, in one-letter code: Cerebellin-4 (198 aa).

An N-terminal signal peptide occupies residues 1-24 (MGSARRALSVVPAVLLILVLPVWA). Asparagine 26 and asparagine 85 each carry an N-linked (GlcNAc...) asparagine glycan. Residues 63 to 198 (AANSKVAFSA…TFSGFLVFPL (136 aa)) form the C1q domain.

In terms of assembly, homohexamer; disulfide-linked homotrimers. The trimers are assembled via the globular C1q domains. The trimers associate via N-terminal cysteine residues to form disulfide-linked hexamers. May form oligomers with CBLN1, CBLN2 and CBLN3 prior to secretion. Once secreted, does not interact with other CBLN family members. Strongly interacts with DCC in a NTN1-displaceable fashion. Weakly binds to NRXN1 and NRXN2 long and short isoforms produced by alternative promoter usage. Interaction with NRXN3 short isoform is hardly detectable; no interaction at all with NRXN3 long isoform. Does not interact with NEO1, GRID1 and GRID2. Post-translationally, sialoglycoprotein. Expressed in brain with high levels in particular thalamic nuclei. In the thalamus, predominantly expressed in neurons within the parafascicular nucleus. Found in the hippocampus, mostly in the dendrites and somata of pyramidal neurons (at protein level). Very low or no expression in most other brain regions. Highly expressed in the ventral medial habenula.

The protein localises to the secreted. It is found in the synapse. Its function is as follows. Acts as a synaptic organizer in specific subsets of neurons in the brain. Essential for the formation and maintenance of inhibitory GABAergic synapses. Promotes the development of dendrite-targeting inhibitory GABAergic synapses made by somatostatin-positive interneurons. May contribute to the function of ventral medial habenula region of the brain implicated in the regulation of anxiety-related behaviors. May play a role in CBLN3 export from the endoplasmic reticulum and secretion. In Mus musculus (Mouse), this protein is Cerebellin-4 (Cbln4).